The sequence spans 423 residues: CinA-like protein (423 aa).

It belongs to the CinA family.

This Prochlorococcus marinus (strain SARG / CCMP1375 / SS120) protein is CinA-like protein.